Here is a 137-residue protein sequence, read N- to C-terminus: Large ribosomal subunit protein uL16 (137 aa).

It belongs to the universal ribosomal protein uL16 family. In terms of assembly, part of the 50S ribosomal subunit.

Its function is as follows. Binds 23S rRNA and is also seen to make contacts with the A and possibly P site tRNAs. The chain is Large ribosomal subunit protein uL16 from Leuconostoc mesenteroides subsp. mesenteroides (strain ATCC 8293 / DSM 20343 / BCRC 11652 / CCM 1803 / JCM 6124 / NCDO 523 / NBRC 100496 / NCIMB 8023 / NCTC 12954 / NRRL B-1118 / 37Y).